The sequence spans 409 residues: Putative competence-damage inducible protein (409 aa).

It belongs to the CinA family.

The sequence is that of Putative competence-damage inducible protein from Clostridium botulinum (strain Okra / Type B1).